The sequence spans 119 residues: Small ribosomal subunit protein uS10 (119 aa).

This sequence belongs to the universal ribosomal protein uS10 family. As to quaternary structure, component of the 40S small ribosomal subunit.

It localises to the cytoplasm. Component of the small ribosomal subunit. The ribosome is a large ribonucleoprotein complex responsible for the synthesis of proteins in the cell. This is Small ribosomal subunit protein uS10 (rps20) from Xenopus laevis (African clawed frog).